The primary structure comprises 282 residues: Lipoyl synthase (282 aa).

Cysteine 37, cysteine 42, cysteine 48, cysteine 63, cysteine 67, cysteine 70, and serine 275 together coordinate [4Fe-4S] cluster. The Radical SAM core domain occupies tryptophan 49–arginine 264.

Belongs to the radical SAM superfamily. Lipoyl synthase family. [4Fe-4S] cluster is required as a cofactor.

It is found in the cytoplasm. It carries out the reaction [[Fe-S] cluster scaffold protein carrying a second [4Fe-4S](2+) cluster] + N(6)-octanoyl-L-lysyl-[protein] + 2 oxidized [2Fe-2S]-[ferredoxin] + 2 S-adenosyl-L-methionine + 4 H(+) = [[Fe-S] cluster scaffold protein] + N(6)-[(R)-dihydrolipoyl]-L-lysyl-[protein] + 4 Fe(3+) + 2 hydrogen sulfide + 2 5'-deoxyadenosine + 2 L-methionine + 2 reduced [2Fe-2S]-[ferredoxin]. The protein operates within protein modification; protein lipoylation via endogenous pathway; protein N(6)-(lipoyl)lysine from octanoyl-[acyl-carrier-protein]: step 2/2. Catalyzes the radical-mediated insertion of two sulfur atoms into the C-6 and C-8 positions of the octanoyl moiety bound to the lipoyl domains of lipoate-dependent enzymes, thereby converting the octanoylated domains into lipoylated derivatives. The chain is Lipoyl synthase from Porphyromonas gingivalis (strain ATCC 33277 / DSM 20709 / CIP 103683 / JCM 12257 / NCTC 11834 / 2561).